We begin with the raw amino-acid sequence, 396 residues long: Elongation factor Tu (396 aa).

The tr-type G domain maps to 10–206 (KPHVNVGTIG…ALDSYIPEPT (197 aa)). The segment at 19–26 (GHVDHGKT) is G1. A GTP-binding site is contributed by 19–26 (GHVDHGKT). Thr26 contacts Mg(2+). A G2 region spans residues 60-64 (GITIS). Residues 81–84 (DCPG) are G3. GTP is bound by residues 81–85 (DCPGH) and 136–139 (NKAD). A G4 region spans residues 136-139 (NKAD). Positions 174 to 176 (SAL) are G5.

The protein belongs to the TRAFAC class translation factor GTPase superfamily. Classic translation factor GTPase family. EF-Tu/EF-1A subfamily. Monomer.

Its subcellular location is the cytoplasm. It catalyses the reaction GTP + H2O = GDP + phosphate + H(+). GTP hydrolase that promotes the GTP-dependent binding of aminoacyl-tRNA to the A-site of ribosomes during protein biosynthesis. The polypeptide is Elongation factor Tu (Hydrogenovibrio crunogenus (strain DSM 25203 / XCL-2) (Thiomicrospira crunogena)).